A 153-amino-acid polypeptide reads, in one-letter code: Nucleoside diphosphate kinase 3 (153 aa).

K11, F59, R87, T93, R104, and N114 together coordinate ATP. H117 (pros-phosphohistidine intermediate) is an active-site residue.

The protein belongs to the NDK family. As to quaternary structure, homohexamer. It depends on Mg(2+) as a cofactor.

The protein localises to the plastid. The protein resides in the chloroplast thylakoid lumen. The catalysed reaction is a 2'-deoxyribonucleoside 5'-diphosphate + ATP = a 2'-deoxyribonucleoside 5'-triphosphate + ADP. It catalyses the reaction a ribonucleoside 5'-diphosphate + ATP = a ribonucleoside 5'-triphosphate + ADP. In terms of biological role, major role in the synthesis of nucleoside triphosphates other than ATP. The ATP gamma phosphate is transferred to the NDP beta phosphate via a ping-pong mechanism, using a phosphorylated active-site intermediate. Shows the highest specificity towards GDP. This is Nucleoside diphosphate kinase 3 from Spinacia oleracea (Spinach).